Consider the following 94-residue polypeptide: Small nuclear ribonucleoprotein E (94 aa).

Positions 14 to 94 (INCIFNFLQQ…DNITLITSAD (81 aa)) constitute a Sm domain.

This sequence belongs to the snRNP Sm proteins family. As to quaternary structure, component of the Sm core complex, present in spliceosomal snRNP U1, U2, U4/U6 and U5. The core complex contains SMB1, SMD1, SMD2, SMD3, SME1, SMX3 and SMX2 (Sm proteins B, D1, D2, D3, E, F and G, respectively), and is probably a heptameric ring structure. SME1 specifically interacts with SMX2 and SMX3. Component of the U4/U6-U5 tri-snRNP complex composed of the U4, U6 and U5 snRNAs and at least PRP3, PRP4, PRP6, PRP8, PRP18, PRP31, PRP38, SNU13, SNU23, SNU66, SNU114, SPP381, SMB1, SMD1, SMD2, SMD3, SMX2, SMX3, LSM2, LSM3, LSM4, LSM5, LSM6, LSM7, LSM8, BRR2 and DIB1.

The protein localises to the cytoplasm. It is found in the nucleus. In terms of biological role, involved in pre-mRNA splicing. Binds and is required for the stability of snRNA U1, U2, U4 and U5 which contain a highly conserved structural motif called the Sm binding site. Involved in cap modification. The sequence is that of Small nuclear ribonucleoprotein E (SME1) from Saccharomyces cerevisiae (strain ATCC 204508 / S288c) (Baker's yeast).